The following is a 1070-amino-acid chain: DNA-directed RNA polymerase subunit beta (1070 aa).

Belongs to the RNA polymerase beta chain family. In plastids the minimal PEP RNA polymerase catalytic core is composed of four subunits: alpha, beta, beta', and beta''. When a (nuclear-encoded) sigma factor is associated with the core the holoenzyme is formed, which can initiate transcription.

The protein resides in the plastid. Its subcellular location is the chloroplast. The catalysed reaction is RNA(n) + a ribonucleoside 5'-triphosphate = RNA(n+1) + diphosphate. Its function is as follows. DNA-dependent RNA polymerase catalyzes the transcription of DNA into RNA using the four ribonucleoside triphosphates as substrates. In Gossypium barbadense (Sea Island cotton), this protein is DNA-directed RNA polymerase subunit beta.